A 229-amino-acid polypeptide reads, in one-letter code: LIGIQAEPHTESNVPAGHAIPQAHWTKLQHSLDTALRRAHSAPAGANSARVAGQTRNITVDPKLFKKRRLRSPRVLFSTQPPPVAADTQDPDLEASGAASFNRTHRSKRSSSHPVFHRGEFSVCDSVSVWVGDKTTATDIKGKEVMVLGEVNINNSVFKQYFFETKCRDPNPVDSGCRGIDSKHWNSYCTTTHTFVKALTMDGKQAAWRFIRIDTACVCVLSRKAGRRA.

Positions 1–6 are cleaved as a signal peptide; that stretch reads LIGIQA. Positions 7 to 109 are excised as a propeptide; that stretch reads EPHTESNVPA…SFNRTHRSKR (103 aa). 3 N-linked (GlcNAc...) asparagine glycosylation sites follow: Asn57, Asn102, and Asn154. The segment at 77-112 is disordered; the sequence is FSTQPPPVAADTQDPDLEASGAASFNRTHRSKRSSS. 3 disulfides stabilise this stretch: Cys124–Cys189, Cys167–Cys217, and Cys177–Cys219. 2 residues coordinate a 1-acyl-sn-glycero-3-phospho-(1D-myo-inositol): Tyr161 and Lys197. Lys197 contacts a 1-acyl-sn-glycero-3-phospho-L-serine.

This sequence belongs to the NGF-beta family. In terms of assembly, homodimer. The homodimer interacts with a single NTRK1 chain. The homodimer interacts with a single NGFR chain. The NGF dimer interacts with a single SORCS2 chain (via extracellular domain). The NGF precursor (proNGF) binds to a receptor complex formed by SORT1 and NGFR, which leads to NGF endocytosis. Both mature NGF and the immature NGF precursor (proNGF) interact with SORCS2 and with the heterodimer formed by SORCS2 and NGFR (via extracellular domains). The NGF precursor (proNGF) has much higher affinity for SORCS2 than mature NGF. The NGF precursor (proNGF) has much higher affinity for SORT1 than mature NGF. Interacts with ADAM10 in a divalent cation-dependent manner. Interacts with SORCS3.

It localises to the secreted. Its subcellular location is the endosome lumen. In terms of biological role, nerve growth factor is important for the development and maintenance of the sympathetic and sensory nervous systems. Extracellular ligand for the NTRK1 and NGFR receptors, activates cellular signaling cascades to regulate neuronal proliferation, differentiation and survival. The immature NGF precursor (proNGF) functions as a ligand for the heterodimeric receptor formed by SORCS2 and NGFR, and activates cellular signaling cascades that lead to inactivation of RAC1 and/or RAC2, reorganization of the actin cytoskeleton and neuronal growth cone collapse. In contrast to mature NGF, the precursor form (proNGF) promotes neuronal apoptosis (in vitro). Inhibits metalloproteinase-dependent proteolysis of platelet glycoprotein VI. Binds lysophosphatidylinositol and lysophosphatidylserine between the two chains of the homodimer. The lipid-bound form promotes histamine relase from mast cells, contrary to the lipid-free form. The chain is Beta-nerve growth factor (NGF) from Sus scrofa (Pig).